The primary structure comprises 117 residues: Ribosome-binding factor A (117 aa).

This sequence belongs to the RbfA family. Monomer. Binds 30S ribosomal subunits, but not 50S ribosomal subunits or 70S ribosomes.

Its subcellular location is the cytoplasm. In terms of biological role, one of several proteins that assist in the late maturation steps of the functional core of the 30S ribosomal subunit. Associates with free 30S ribosomal subunits (but not with 30S subunits that are part of 70S ribosomes or polysomes). Required for efficient processing of 16S rRNA. May interact with the 5'-terminal helix region of 16S rRNA. The sequence is that of Ribosome-binding factor A from Lacticaseibacillus casei (strain BL23) (Lactobacillus casei).